The primary structure comprises 162 residues: Ubiquitin D (162 aa).

2 Ubiquitin-like domains span residues 3–78 (SVRT…LKVV) and 87–160 (LFLV…THCT).

This sequence belongs to the ubiquitin D family. In terms of assembly, interacts directly with the 26S proteasome. Interacts with NUB1; this interaction facilitates the linking of UBD-conjugated target protein to the proteasome complex and accelerates its own degradation and that of its conjugates. Interacts (via ubiquitin-like 1 domain) with the spindle checkpoint protein MAD2L1 during mitosis. Present in aggresomes of proteasome inhibited cells. Interacts with HDAC6 under proteasome impairment conditions. Forms a thioester with UBA6 in cells stimulated with tumor necrosis factor-alpha (TNFa) and interferon-gamma (IFNg). Interacts with SQSTM1 and TP53/p53. Can be acetylated. Mostly expressed in thymus and intestine.

The protein resides in the nucleus. The protein localises to the cytoplasm. Its function is as follows. Ubiquitin-like protein modifier which can be covalently attached to target proteins and subsequently leads to their degradation by the 26S proteasome, in a NUB1-dependent manner. Conjugation to the target protein is activated by UBA6 via adenylation of its C-terminal glycine. Probably functions as a survival factor. Promotes the expression of the proteasome subunit beta type-9 (PSMB9/LMP2). Regulates TNF-alpha-induced and LPS-mediated activation of the central mediator of innate immunity NF-kappa-B by promoting TNF-alpha-mediated proteasomal degradation of ubiquitinated-I-kappa-B-alpha. Required for TNF-alpha-induced p65 nuclear translocation in renal tubular epithelial cells (RTECs). May be involved in dendritic cell (DC) maturation, the process by which immature dendritic cells differentiate into fully competent antigen-presenting cells that initiate T-cell responses. Mediates mitotic non-disjunction and chromosome instability, in long-term in vitro culture and cancers, by abbreviating mitotic phase and impairing the kinetochore localization of MAD2L1 during the prometaphase stage of the cell cycle. May be involved in the formation of aggresomes when proteasome is saturated or impaired. Mediates apoptosis in a caspase-dependent manner, especially in renal epithelium and tubular cells during renal diseases. In Mus musculus (Mouse), this protein is Ubiquitin D (Ubd).